The following is a 426-amino-acid chain: UPF0597 protein CLD_2825 (426 aa).

The protein belongs to the UPF0597 family.

In Clostridium botulinum (strain Okra / Type B1), this protein is UPF0597 protein CLD_2825.